Reading from the N-terminus, the 270-residue chain is Extracellular metalloprotease MCYG_04966 (270 aa).

The first 19 residues, 1–19 (MRLSLFLSGLAAAGSIVSA), serve as a signal peptide directing secretion. Residue Asn-135 is glycosylated (N-linked (GlcNAc...) asparagine). His-184 contributes to the Zn(2+) binding site. The active site involves Glu-185. His-188 provides a ligand contact to Zn(2+). Asn-199 carries N-linked (GlcNAc...) asparagine glycosylation. The disordered stretch occupies residues 208–227 (VADTPPQSKKTSGCPNSQDS). Polar residues predominate over residues 212-227 (PPQSKKTSGCPNSQDS). Cys-221 and Cys-247 are disulfide-bonded.

This sequence belongs to the peptidase M43B family.

Its subcellular location is the secreted. Secreted metalloproteinase that allows assimilation of proteinaceous substrates. Plays a pivotal role as a pathogenicity determinant during infections and contributes to the ability of the pathogen to persist within the mammalian host. This chain is Extracellular metalloprotease MCYG_04966, found in Arthroderma otae (strain ATCC MYA-4605 / CBS 113480) (Microsporum canis).